The following is a 101-amino-acid chain: NAD(P)H-quinone oxidoreductase subunit 4L, chloroplastic (101 aa).

3 helical membrane passes run 2-22, 32-52, and 61-81; these read ILEH…YGLI, MCLE…SDFF, and IFSI…PAIL.

The protein belongs to the complex I subunit 4L family. NDH is composed of at least 16 different subunits, 5 of which are encoded in the nucleus.

The protein resides in the plastid. Its subcellular location is the chloroplast thylakoid membrane. It catalyses the reaction a plastoquinone + NADH + (n+1) H(+)(in) = a plastoquinol + NAD(+) + n H(+)(out). The enzyme catalyses a plastoquinone + NADPH + (n+1) H(+)(in) = a plastoquinol + NADP(+) + n H(+)(out). In terms of biological role, NDH shuttles electrons from NAD(P)H:plastoquinone, via FMN and iron-sulfur (Fe-S) centers, to quinones in the photosynthetic chain and possibly in a chloroplast respiratory chain. The immediate electron acceptor for the enzyme in this species is believed to be plastoquinone. Couples the redox reaction to proton translocation, and thus conserves the redox energy in a proton gradient. The polypeptide is NAD(P)H-quinone oxidoreductase subunit 4L, chloroplastic (Platanus occidentalis (Sycamore)).